Here is a 173-residue protein sequence, read N- to C-terminus: MRFLLLAAFVAYAYAKSDEEIRKDALSALDVVPLGSTPEKLENGREFYKYFFTNHQDLRKYFKGAETFTADDIAKSDRFKKLGNQLLLSVHLAADTYDNEMIFRAFVRDTIDRHVDRGLDPKLWKEFWSIYQKFLESKGKTLSADQKAAFDAIGTRFNDEAQKQLAHHGLPHT.

An N-terminal signal peptide occupies residues 1-15; that stretch reads MRFLLLAAFVAYAYA. In terms of domain architecture, Globin spans 25–166; it reads ALSALDVVPL…FNDEAQKQLA (142 aa). H114 is a binding site for heme b.

This sequence belongs to the globin family.

It localises to the secreted. The protein localises to the extracellular space. Functionally, may be a globin and may play a role in oxygen transport. The sequence is that of Globin-like host-protective antigen from Trichostrongylus colubriformis (Black scour worm).